The sequence spans 199 residues: 5'-deoxynucleotidase YfbR (199 aa).

Substrate-binding positions include 18–19 (RW) and His-33. In terms of domain architecture, HD spans 30 to 142 (VSEHSLQVAM…VKQADALCAY (113 aa)). A divalent metal cation-binding residues include His-33, His-68, and Asp-69. Residues Asp-69, 77–80 (DLPT), and Asp-137 each bind substrate. Residue Asp-137 participates in a divalent metal cation binding.

Belongs to the 5DNU family. Homodimer. The cofactor is a divalent metal cation.

It is found in the cytoplasm. The catalysed reaction is a 2'-deoxyribonucleoside 5'-phosphate + H2O = a 2'-deoxyribonucleoside + phosphate. Functionally, catalyzes the strictly specific dephosphorylation of 2'-deoxyribonucleoside 5'-monophosphates. In Escherichia coli (strain K12 / MC4100 / BW2952), this protein is 5'-deoxynucleotidase YfbR.